The sequence spans 473 residues: Photosystem II CP43 reaction center protein (473 aa).

Residues 1–14 constitute a propeptide that is removed on maturation; it reads MKTLYSLRRYFHVE. T15 bears the N-acetylthreonine mark. T15 carries the phosphothreonine modification. A run of 5 helical transmembrane segments spans residues 69 to 93, 134 to 155, 178 to 200, 255 to 275, and 291 to 312; these read LFEV…PHLA, LIGP…KDKN, KAMY…RVIS, KPFA…LSYS, and WFNN…ASQA. E367 lines the [CaMn4O5] cluster pocket. A helical transmembrane segment spans residues 447–471; it reads RARAAAAGFEKGIDRDTEPVLSMRP.

This sequence belongs to the PsbB/PsbC family. PsbC subfamily. As to quaternary structure, PSII is composed of 1 copy each of membrane proteins PsbA, PsbB, PsbC, PsbD, PsbE, PsbF, PsbH, PsbI, PsbJ, PsbK, PsbL, PsbM, PsbT, PsbX, PsbY, PsbZ, Psb30/Ycf12, at least 3 peripheral proteins of the oxygen-evolving complex and a large number of cofactors. It forms dimeric complexes. The cofactor is Binds multiple chlorophylls and provides some of the ligands for the Ca-4Mn-5O cluster of the oxygen-evolving complex. It may also provide a ligand for a Cl- that is required for oxygen evolution. PSII binds additional chlorophylls, carotenoids and specific lipids..

It localises to the plastid. It is found in the chloroplast thylakoid membrane. Its function is as follows. One of the components of the core complex of photosystem II (PSII). It binds chlorophyll and helps catalyze the primary light-induced photochemical processes of PSII. PSII is a light-driven water:plastoquinone oxidoreductase, using light energy to abstract electrons from H(2)O, generating O(2) and a proton gradient subsequently used for ATP formation. The polypeptide is Photosystem II CP43 reaction center protein (Ostreococcus tauri).